We begin with the raw amino-acid sequence, 104 residues long: N(4)-acetylcytidine amidohydrolase (104 aa).

Positions 7–93 (MTFFSRFEAD…EVIQEIYPGI (87 aa)) constitute an ASCH domain. The active-site Proton acceptor is the Lys22. Residue Thr25 is the Nucleophile of the active site. The active-site Proton donor is the Glu75.

The protein belongs to the N(4)-acetylcytidine amidohydrolase family.

It catalyses the reaction N(4)-acetylcytidine + H2O = cytidine + acetate + H(+). The catalysed reaction is N(4)-acetyl-2'-deoxycytidine + H2O = 2'-deoxycytidine + acetate + H(+). The enzyme catalyses N(4)-acetylcytosine + H2O = cytosine + acetate + H(+). Catalyzes the hydrolysis of N(4)-acetylcytidine (ac4C). The protein is N(4)-acetylcytidine amidohydrolase of Vibrio vulnificus (strain CMCP6).